The sequence spans 84 residues: Small ribosomal subunit protein uS17 (84 aa).

Belongs to the universal ribosomal protein uS17 family. In terms of assembly, part of the 30S ribosomal subunit.

Its function is as follows. One of the primary rRNA binding proteins, it binds specifically to the 5'-end of 16S ribosomal RNA. The chain is Small ribosomal subunit protein uS17 from Pectobacterium atrosepticum (strain SCRI 1043 / ATCC BAA-672) (Erwinia carotovora subsp. atroseptica).